The following is an 82-amino-acid chain: uncharacterized protein (82 aa).

This is an uncharacterized protein from Ictalurid herpesvirus 1 (strain Auburn) (IcHV-1).